Here is a 265-residue protein sequence, read N- to C-terminus: Hydroxyethylthiazole kinase (265 aa).

Position 50 (methionine 50) interacts with substrate. ATP contacts are provided by arginine 125 and threonine 171. Substrate is bound at residue glycine 198.

Belongs to the Thz kinase family. The cofactor is Mg(2+).

It carries out the reaction 5-(2-hydroxyethyl)-4-methylthiazole + ATP = 4-methyl-5-(2-phosphooxyethyl)-thiazole + ADP + H(+). The protein operates within cofactor biosynthesis; thiamine diphosphate biosynthesis; 4-methyl-5-(2-phosphoethyl)-thiazole from 5-(2-hydroxyethyl)-4-methylthiazole: step 1/1. In terms of biological role, catalyzes the phosphorylation of the hydroxyl group of 4-methyl-5-beta-hydroxyethylthiazole (THZ). In Salmonella paratyphi A (strain ATCC 9150 / SARB42), this protein is Hydroxyethylthiazole kinase.